Consider the following 199-residue polypeptide: dCTP deaminase (199 aa).

DCTP contacts are provided by residues R110–R115, D128, V136–E138, Y171, and Q182. E138 serves as the catalytic Proton donor/acceptor.

The protein belongs to the dCTP deaminase family. In terms of assembly, homotrimer.

It carries out the reaction dCTP + H2O + H(+) = dUTP + NH4(+). Its pathway is pyrimidine metabolism; dUMP biosynthesis; dUMP from dCTP (dUTP route): step 1/2. Catalyzes the deamination of dCTP to dUTP. In Pseudoalteromonas atlantica (strain T6c / ATCC BAA-1087), this protein is dCTP deaminase.